A 638-amino-acid polypeptide reads, in one-letter code: Transcription activator MSS11 (638 aa).

The disordered stretch occupies residues 1-26 (MSKPPPQHQSKNANNSLSSPVSDKQS). The span at 8 to 26 (HQSKNANNSLSSPVSDKQS) shows a compositional bias: polar residues. The region spanning 29–61 (SRQLLLAHLYNYFKTNGLEETAQALLIECNNTI) is the LisH domain. Disordered stretches follow at residues 187 to 216 (LSTT…EQLQ), 270 to 331 (QQRQ…NAVS), 362 to 515 (NNQQ…NNNK), and 572 to 638 (MPPN…PGYE). Polar residues predominate over residues 283-295 (STSSQKSPVINNG). 3 stretches are compositionally biased toward low complexity: residues 296-328 (QPQQ…NNTN), 369-387 (SQQQ…QSSP), and 394-408 (QPKN…TTTS). Over residues 412-423 (KSSRKQQPKNSR) the composition is skewed to basic residues. Residues 425–465 (QSVQQQQQQQPQQQPQQSQQMSTSSQSFTAANNSNNVNNTF) show a composition bias toward low complexity. Positions 466–481 (DISPQIQDQGMLSTKE) are enriched in polar residues. Low complexity-rich tracts occupy residues 495–515 (SQPQ…NNNK) and 572–585 (MPPN…PSQS). A compositionally biased stretch (gly residues) spans 586-595 (GDGGGGGGGS).

The protein belongs to the MSS11 family. Interacts with FLO8.

Its subcellular location is the cytoplasm. The protein resides in the nucleus. Functionally, transcription factor that regulates pseudohyphal differentiation, invasive growth, floculation, adhesion and starch metabolism in response to nutrient availability. The protein is Transcription activator MSS11 (MSS11) of Candida albicans (strain SC5314 / ATCC MYA-2876) (Yeast).